The following is a 177-amino-acid chain: ATP synthase subunit delta (177 aa).

The protein belongs to the ATPase delta chain family. In terms of assembly, F-type ATPases have 2 components, F(1) - the catalytic core - and F(0) - the membrane proton channel. F(1) has five subunits: alpha(3), beta(3), gamma(1), delta(1), epsilon(1). F(0) has three main subunits: a(1), b(2) and c(10-14). The alpha and beta chains form an alternating ring which encloses part of the gamma chain. F(1) is attached to F(0) by a central stalk formed by the gamma and epsilon chains, while a peripheral stalk is formed by the delta and b chains.

It is found in the cell inner membrane. In terms of biological role, f(1)F(0) ATP synthase produces ATP from ADP in the presence of a proton or sodium gradient. F-type ATPases consist of two structural domains, F(1) containing the extramembraneous catalytic core and F(0) containing the membrane proton channel, linked together by a central stalk and a peripheral stalk. During catalysis, ATP synthesis in the catalytic domain of F(1) is coupled via a rotary mechanism of the central stalk subunits to proton translocation. This protein is part of the stalk that links CF(0) to CF(1). It either transmits conformational changes from CF(0) to CF(1) or is implicated in proton conduction. This is ATP synthase subunit delta from Neisseria gonorrhoeae (strain ATCC 700825 / FA 1090).